The following is a 52-amino-acid chain: Large ribosomal subunit protein bL33 (52 aa).

It belongs to the bacterial ribosomal protein bL33 family.

The chain is Large ribosomal subunit protein bL33 from Anaeromyxobacter dehalogenans (strain 2CP-C).